A 137-amino-acid polypeptide reads, in one-letter code: Probable calcium-binding protein CML33 (137 aa).

4 consecutive EF-hand domains span residues 1–36 (MNNM…LSPS), 37–72 (IPSE…TAQS), 76–111 (DVEK…LGEK), and 112–137 (CTVE…FVGV). 5 residues coordinate Ca(2+): Asp-14, Ser-16, Asp-18, Lys-20, and Glu-25. The Ca(2+) site is built by Asp-89, Asn-91, Asp-93, Lys-95, and Glu-100.

Functionally, potential calcium sensor. In Arabidopsis thaliana (Mouse-ear cress), this protein is Probable calcium-binding protein CML33 (CML33).